A 569-amino-acid chain; its full sequence is Sulfite reductase [NADPH] hemoprotein beta-component (569 aa).

Positions 433, 439, 478, and 482 each coordinate [4Fe-4S] cluster. Cysteine 482 lines the siroheme pocket.

Belongs to the nitrite and sulfite reductase 4Fe-4S domain family. As to quaternary structure, alpha(8)-beta(8). The alpha component is a flavoprotein, the beta component is a hemoprotein. Requires siroheme as cofactor. It depends on [4Fe-4S] cluster as a cofactor.

It catalyses the reaction hydrogen sulfide + 3 NADP(+) + 3 H2O = sulfite + 3 NADPH + 4 H(+). It functions in the pathway sulfur metabolism; hydrogen sulfide biosynthesis; hydrogen sulfide from sulfite (NADPH route): step 1/1. Component of the sulfite reductase complex that catalyzes the 6-electron reduction of sulfite to sulfide. This is one of several activities required for the biosynthesis of L-cysteine from sulfate. In Buchnera aphidicola subsp. Acyrthosiphon pisum (strain Tuc7), this protein is Sulfite reductase [NADPH] hemoprotein beta-component.